The sequence spans 399 residues: 1-deoxy-D-xylulose 5-phosphate reductoisomerase (399 aa).

Thr13, Gly14, Ser15, Ile16, and Asn127 together coordinate NADPH. 1-deoxy-D-xylulose 5-phosphate is bound at residue Lys128. Glu129 is a binding site for NADPH. Residue Asp153 participates in Mn(2+) binding. 1-deoxy-D-xylulose 5-phosphate-binding residues include Ser154, Glu155, Ser187, and His210. A Mn(2+)-binding site is contributed by Glu155. An NADPH-binding site is contributed by Gly216. Residues Ser223, Asn228, Lys229, and Glu232 each coordinate 1-deoxy-D-xylulose 5-phosphate. Residue Glu232 coordinates Mn(2+).

It belongs to the DXR family. Mg(2+) serves as cofactor. Mn(2+) is required as a cofactor.

The enzyme catalyses 2-C-methyl-D-erythritol 4-phosphate + NADP(+) = 1-deoxy-D-xylulose 5-phosphate + NADPH + H(+). The protein operates within isoprenoid biosynthesis; isopentenyl diphosphate biosynthesis via DXP pathway; isopentenyl diphosphate from 1-deoxy-D-xylulose 5-phosphate: step 1/6. Catalyzes the NADPH-dependent rearrangement and reduction of 1-deoxy-D-xylulose-5-phosphate (DXP) to 2-C-methyl-D-erythritol 4-phosphate (MEP). In Bordetella petrii (strain ATCC BAA-461 / DSM 12804 / CCUG 43448), this protein is 1-deoxy-D-xylulose 5-phosphate reductoisomerase.